Here is a 369-residue protein sequence, read N- to C-terminus: Ribonuclease D (369 aa).

Residues 4 to 168 enclose the 3'-5' exonuclease domain; the sequence is EIITTTAQLH…CLEKLQQQLE (165 aa). The HRDC domain maps to 207–286; that stretch reads DRQGLAIIKA…TQVISQDEST (80 aa).

It belongs to the RNase D family. It depends on a divalent metal cation as a cofactor.

It is found in the cytoplasm. The catalysed reaction is Exonucleolytic cleavage that removes extra residues from the 3'-terminus of tRNA to produce 5'-mononucleotides.. In terms of biological role, exonuclease involved in the 3' processing of various precursor tRNAs. Initiates hydrolysis at the 3'-terminus of an RNA molecule and releases 5'-mononucleotides. The chain is Ribonuclease D from Psychromonas ingrahamii (strain DSM 17664 / CCUG 51855 / 37).